The chain runs to 179 residues: Diphosphoinositol polyphosphate phosphohydrolase 2 (179 aa).

Substrate-binding positions include Arg9, 17–19 (KKR), and 38–40 (SSR). Residues 17–143 (KKRAACLCFR…VHAEYLERLK (127 aa)) form the Nudix hydrolase domain. Residues Gly49 and Glu65 each contribute to the Mg(2+) site. Residues 50 to 71 (GGVEPEEEPGGAAAREVYEEAG) carry the Nudix box motif. Glu68 (proton acceptor) is an active-site residue. Residue Glu69 coordinates Mg(2+). Substrate is bound by residues 88–90 (RKH), Arg114, and Lys132.

Belongs to the Nudix hydrolase family. DIPP subfamily. It depends on Mg(2+) as a cofactor. Mn(2+) serves as cofactor.

It is found in the cytoplasm. The enzyme catalyses diphospho-myo-inositol polyphosphate + H2O = myo-inositol polyphosphate + phosphate.. It carries out the reaction 5-diphospho-1D-myo-inositol 1,2,3,4,6-pentakisphosphate + H2O = 1D-myo-inositol hexakisphosphate + phosphate + H(+). It catalyses the reaction 3,5-bis(diphospho)-1D-myo-inositol 1,2,4,6-tetrakisphosphate + H2O = 3-diphospho-1D-myo-inositol 1,2,4,5,6-pentakisphosphate + phosphate + 2 H(+). The catalysed reaction is 5-diphospho-1D-myo-inositol 1,3,4,6-tetrakisphosphate + H2O = 1D-myo-inositol 1,3,4,5,6-pentakisphosphate + phosphate + H(+). The enzyme catalyses P(1),P(6)-bis(5'-adenosyl) hexaphosphate + H2O = 2 ATP + 2 H(+). It carries out the reaction P(1),P(5)-bis(5'-adenosyl) pentaphosphate + H2O = ADP + ATP + 2 H(+). It catalyses the reaction 5-phospho-alpha-D-ribose 1-diphosphate + H2O = alpha-D-ribose 1,5-bisphosphate + phosphate + H(+). Functionally, cleaves the beta-phosphate from diphosphoinositol polyphosphates such as PP-InsP5 (diphosphoinositol pentakisphosphate), PP-InsP4 (diphosphoinositol tetrakisphosphate) and [PP]2-InsP4 (bisdiphosphoinositol tetrakisphosphate), suggesting that it may play a role in signal transduction. Diadenosine polyphosphates, particularly Ap6A (P(1),P(6)-bis(5a-adenosyl) hexaphosphate) and Ap5A (P(1),P(5)-bis(5'-adenosyl) pentaphosphate) are downstream effectors of a signaling cascade that regulates cardiac KATP channels, can also be substrates, although with lower preference than the diphosphoinositol polyphosphates. Can also catalyze the hydrolysis of 5-phosphoribose 1-diphosphate, generating the glycolytic activator ribose 1,5-bisphosphate. Does not play a role in U8 snoRNA decapping activity. Binds U8 snoRNA. In Rattus norvegicus (Rat), this protein is Diphosphoinositol polyphosphate phosphohydrolase 2.